The following is a 334-amino-acid chain: Protein-methionine-sulfoxide reductase catalytic subunit MsrP (334 aa).

Residues 1–44 (MKKNQFLKESDITAESVFFMKRRQVLKALGISAAALSLPHAAHA) constitute a signal peptide (tat-type signal). Mo-molybdopterin is bound by residues Asn88, 91-92 (YE), Cys146, Thr181, Asn233, Arg238, and 249-251 (GIK).

It belongs to the MsrP family. As to quaternary structure, heterodimer of a catalytic subunit (MsrP) and a heme-binding subunit (MsrQ). Mo-molybdopterin serves as cofactor. Predicted to be exported by the Tat system. The position of the signal peptide cleavage has not been experimentally proven.

Its subcellular location is the periplasm. The catalysed reaction is L-methionyl-[protein] + a quinone + H2O = L-methionyl-(S)-S-oxide-[protein] + a quinol. It catalyses the reaction L-methionyl-[protein] + a quinone + H2O = L-methionyl-(R)-S-oxide-[protein] + a quinol. Its function is as follows. Part of the MsrPQ system that repairs oxidized periplasmic proteins containing methionine sulfoxide residues (Met-O), using respiratory chain electrons. Thus protects these proteins from oxidative-stress damage caused by reactive species of oxygen and chlorine generated by the host defense mechanisms. MsrPQ is essential for the maintenance of envelope integrity under bleach stress, rescuing a wide series of structurally unrelated periplasmic proteins from methionine oxidation, including the primary periplasmic chaperone SurA and the lipoprotein Pal. The catalytic subunit MsrP is non-stereospecific, being able to reduce both (R-) and (S-) diastereoisomers of methionine sulfoxide. The sequence is that of Protein-methionine-sulfoxide reductase catalytic subunit MsrP from Shigella dysenteriae serotype 1 (strain Sd197).